The chain runs to 301 residues: GTPase Era (301 aa).

Positions 7–175 (YCGFIAIVGR…AAIVRKHLPE (169 aa)) constitute an Era-type G domain. The segment at 15–22 (GRPNVGKS) is G1. 15–22 (GRPNVGKS) contributes to the GTP binding site. Positions 41-45 (QTTRH) are G2. Positions 62 to 65 (DTPG) are G3. Residues 62–66 (DTPGL) and 124–127 (NKVD) each bind GTP. The G4 stretch occupies residues 124 to 127 (NKVD). The G5 stretch occupies residues 154 to 156 (ISA). One can recognise a KH type-2 domain in the interval 206–283 (LGAELPYSVT…HLELWVKVKS (78 aa)).

It belongs to the TRAFAC class TrmE-Era-EngA-EngB-Septin-like GTPase superfamily. Era GTPase family. In terms of assembly, monomer.

It is found in the cytoplasm. Its subcellular location is the cell inner membrane. Its function is as follows. An essential GTPase that binds both GDP and GTP, with rapid nucleotide exchange. Plays a role in 16S rRNA processing and 30S ribosomal subunit biogenesis and possibly also in cell cycle regulation and energy metabolism. This Shigella dysenteriae serotype 1 (strain Sd197) protein is GTPase Era.